The following is a 188-amino-acid chain: Putative manganese efflux pump MntP (188 aa).

6 consecutive transmembrane segments (helical) span residues 3 to 23, 41 to 61, 62 to 82, 107 to 129, 143 to 163, and 168 to 188; these read LSATILLAFGMSMDAFAASIG, LIFGAIETLTPLVGWGLGMLA, SQFILEWNHWIAFILLVFLGG, LLVTTAFATSLDAMAVGVGLAFL, ATFIMSTLGMMVGRFIGPLLG, and ILGGIVLIGIGSEILWSHFAG.

It belongs to the MntP (TC 9.B.29) family.

The protein resides in the cell inner membrane. Probably functions as a manganese efflux pump. The polypeptide is Putative manganese efflux pump MntP (Klebsiella pneumoniae subsp. pneumoniae (strain ATCC 700721 / MGH 78578)).